The following is a 272-amino-acid chain: MAQASGLMNGKRGVIMGVANNRSIAWGIAKALAEAGAEIALTWQGDALKKRVEPLAQELGAFMAGHCDVTDLATIDAVFSALEEKWGKIDFVVHAIAFSDKDELTGRYLDTSRDNFARTMDISVYSFTAVAARADRVMNDGGSILTLTYYGAEKVMPHYNVMGVAKAALEASVRYLAVDLGNRGIRVNAISAGPIKTLAASGIGDFRYILKWNEYNAPLKRTVSIEEVGNSALYLLSDLSSGVTGEVHHVDSGYHTVGMKAVDAPDISVLKD.

NAD(+) is bound by residues G17, 23–24 (SI), Q44, 68–69 (DV), and I96. Residues Y149 and Y159 each act as proton acceptor in the active site. Residues K166 and 195 to 199 (IKTLA) each bind NAD(+).

It belongs to the short-chain dehydrogenases/reductases (SDR) family. FabI subfamily.

The protein resides in the cell inner membrane. The catalysed reaction is a 2,3-saturated acyl-[ACP] + NAD(+) = a (2E)-enoyl-[ACP] + NADH + H(+). It functions in the pathway lipid metabolism; fatty acid biosynthesis. This is Enoyl-[acyl-carrier-protein] reductase [NADH] 1 (fabI1) from Rhizobium meliloti (strain 1021) (Ensifer meliloti).